A 339-amino-acid polypeptide reads, in one-letter code: D-glycero-alpha-D-manno-heptose 7-phosphate kinase (339 aa).

A substrate-binding site is contributed by 17–20; sequence GGTD. Residues serine 57 and 110 to 116 each bind ATP; that span reads GSGLGGS. 2 residues coordinate Mg(2+): serine 116 and glutamate 148. Aspartate 160 acts as the Proton acceptor in catalysis.

It belongs to the GHMP kinase family.

It carries out the reaction D-glycero-alpha-D-manno-heptose 7-phosphate + ATP = D-glycero-alpha-D-manno-heptose 1,7-bisphosphate + ADP + H(+). Its pathway is nucleotide-sugar biosynthesis; GDP-D-glycero-alpha-D-manno-heptose biosynthesis; GDP-D-glycero-alpha-D-manno-heptose from D-glycero-alpha-D-manno-heptose 7-phosphate: step 1/3. The protein operates within capsule biogenesis; capsule polysaccharide biosynthesis. Catalyzes the phosphorylation of D-glycero-alpha-D-manno-heptose 7-phosphate at the C-1 position to form D-glycero-alpha-D-manno-heptose 1,7-bisphosphate. This is D-glycero-alpha-D-manno-heptose 7-phosphate kinase from Campylobacter jejuni subsp. jejuni serotype O:2 (strain ATCC 700819 / NCTC 11168).